Here is a 726-residue protein sequence, read N- to C-terminus: Catalase-peroxidase (726 aa).

The interval 1–33 is disordered; the sequence is MSTTDDTHNTLSTGKCPFHQGGHDRSAGAGTAS. The tryptophyl-tyrosyl-methioninium (Trp-Tyr) (with M-252) cross-link spans 105-226; the sequence is WHGAGTYRSI…LGATEMGLIY (122 aa). The active-site Proton acceptor is the histidine 106. The segment at residues 226-252 is a cross-link (tryptophyl-tyrosyl-methioninium (Tyr-Met) (with W-105)); the sequence is YVNPEGPDHSGEPLSAAAAIRATFGNM. Histidine 267 is a binding site for heme b.

It belongs to the peroxidase family. Peroxidase/catalase subfamily. In terms of assembly, homodimer or homotetramer. The cofactor is heme b. In terms of processing, formation of the three residue Trp-Tyr-Met cross-link is important for the catalase, but not the peroxidase activity of the enzyme.

It catalyses the reaction H2O2 + AH2 = A + 2 H2O. The enzyme catalyses 2 H2O2 = O2 + 2 H2O. In terms of biological role, bifunctional enzyme with both catalase and broad-spectrum peroxidase activity. This is Catalase-peroxidase from Salmonella typhi.